The following is a 230-amino-acid chain: uncharacterized protein (230 aa).

2 disordered regions span residues 63-90 (TDCQ…KKTI) and 194-230 (KKLE…YKEH). Residues 194–217 (KKLEEREQMDKHPQDRDNKDKEVN) show a composition bias toward basic and acidic residues.

This is an uncharacterized protein from Caenorhabditis elegans.